Reading from the N-terminus, the 204-residue chain is Colicin-A (204 aa).

A run of 2 helical transmembrane segments spans residues 139-161 (SWVL…LGAY) and 165-187 (LGVP…GALI).

The protein belongs to the channel forming colicin family.

The protein resides in the cell membrane. Its function is as follows. This colicin is a channel-forming colicin. This class of transmembrane toxins depolarize the cytoplasmic membrane, leading to dissipation of cellular energy. In terms of biological role, colicins are polypeptide toxins produced by and active against E.coli and closely related bacteria. In Escherichia coli, this protein is Colicin-A (caa).